The primary structure comprises 364 residues: 2-oxoadipate dioxygenase/decarboxylase, chloroplastic/amyloplastic (364 aa).

The transit peptide at 1 to 49 (MAVALAGARSPGAGAILSLRRLAPAAAAPVRLGGSGTPGTRRRRGIAMA) directs the protein to the chloroplast. 2-oxoadipate is bound by residues His107 and Arg111. Residue His107 coordinates Fe(2+). Fe(2+) is bound at residue His243. Residues Gln289 and Tyr313 each coordinate 2-oxoadipate. Glu315 contributes to the Fe(2+) binding site.

The protein belongs to the 2-oxoadipate dioxygenase/decarboxylase family. Fe(2+) is required as a cofactor. As to expression, expressed in roots, stems, leaf sheaths, leaf blades, panicles, and endosperm.

The protein resides in the plastid. The protein localises to the chloroplast. It localises to the amyloplast. It catalyses the reaction 2-oxoadipate + O2 = (R)-2-hydroxyglutarate + CO2. Its pathway is amino-acid degradation. Functionally, catalyzes the decarboxylation and hydroxylation of 2-oxoadipate (2OA) to form D-2-hydroxyglutarate (D-2-HGA). Is involved in a D-lysine catabolic pathway. Involved in the regulation of starch synthesis and amyloplast development within the peripheral endosperm during the grain-filling stage. In Oryza sativa subsp. japonica (Rice), this protein is 2-oxoadipate dioxygenase/decarboxylase, chloroplastic/amyloplastic.